Consider the following 436-residue polypeptide: MIINIKETTMVRPSQPTPSQRLWNSNLDLVVPRFHTPSVYFYRRPGNASDFFDARVLKEALGRALVPFYPMAGRLARDEDGRVEIDCNGEGVRFVVAETDSAIDEFGDFAPTMELKKLIPKVEYGDDISAFPLLVLQITHFKCGGTSLGVGMQHHVADGASGLHFINSWSDIARGLDIAVPPFIDRSLLRARDPPSPSFPHIEYQPAPSMNTSPAPIQDPTVKSDPTATAVSIFKLTKQQLDLLKSRVSAKYSSYALVAGHVWRCTSIARGLPDDQRTKLYCATDGRARLQPPLPSGYFGNVIFTATPVADAGEITGEDSGLEAAAGRIQRALMRMDDEYLRSALDYLELQPDLSKLVRGAHTFRCPNIGLTSWTRLPIHDADFGWGRPIFMGPGGIAYEGLAFMLPSSEGDGSLSIAISLQAEHMIKFQKLLYEI.

Residues H154 and D383 each act as proton acceptor in the active site.

The protein belongs to the plant acyltransferase family. As to expression, mostly expressed in stems, and, to a lower extent, in bulbs.

The protein operates within phenylpropanoid metabolism. In terms of biological role, hydroxycinnamoyl transferase that catalyzes the transfer of an acyl from p-coumaryol-CoA to various acyl acceptors. Can use feruloyl-CoA and caffeoyl-CoA as acyl donors. This chain is Hydroxycinnamoyltransferase, found in Narcissus pseudonarcissus (Daffodil).